The following is a 155-amino-acid chain: Ribosomal RNA large subunit methyltransferase H (155 aa).

S-adenosyl-L-methionine is bound by residues L72, G103, and 122–127; that span reads LSDLTL.

Belongs to the RNA methyltransferase RlmH family. In terms of assembly, homodimer.

The protein resides in the cytoplasm. The enzyme catalyses pseudouridine(1915) in 23S rRNA + S-adenosyl-L-methionine = N(3)-methylpseudouridine(1915) in 23S rRNA + S-adenosyl-L-homocysteine + H(+). Specifically methylates the pseudouridine at position 1915 (m3Psi1915) in 23S rRNA. This is Ribosomal RNA large subunit methyltransferase H from Polaromonas naphthalenivorans (strain CJ2).